Here is a 456-residue protein sequence, read N- to C-terminus: Bifunctional protein GlmU (456 aa).

A pyrophosphorylase region spans residues 1–229 (MSNSAMSVVI…LSEVEGVNNR (229 aa)). Residues 11-14 (LAAG), Lys-25, Gln-76, 81-82 (GT), 103-105 (YGD), Gly-140, Glu-154, Asn-169, and Asn-227 each bind UDP-N-acetyl-alpha-D-glucosamine. A Mg(2+)-binding site is contributed by Asp-105. Asn-227 lines the Mg(2+) pocket. Residues 230-250 (LQLSRLERIYQAEQSEKLLLA) form a linker region. The segment at 251 to 456 (GVMLLDPARF…QGWQRPVKKK (206 aa)) is N-acetyltransferase. Positions 333 and 351 each coordinate UDP-N-acetyl-alpha-D-glucosamine. The Proton acceptor role is filled by His-363. Residues Tyr-366 and Asn-377 each contribute to the UDP-N-acetyl-alpha-D-glucosamine site. Acetyl-CoA is bound by residues Ala-380, 386–387 (NY), Ser-405, Ala-423, and Arg-440.

In the N-terminal section; belongs to the N-acetylglucosamine-1-phosphate uridyltransferase family. This sequence in the C-terminal section; belongs to the transferase hexapeptide repeat family. Homotrimer. Requires Mg(2+) as cofactor.

The protein resides in the cytoplasm. It carries out the reaction alpha-D-glucosamine 1-phosphate + acetyl-CoA = N-acetyl-alpha-D-glucosamine 1-phosphate + CoA + H(+). The catalysed reaction is N-acetyl-alpha-D-glucosamine 1-phosphate + UTP + H(+) = UDP-N-acetyl-alpha-D-glucosamine + diphosphate. Its pathway is nucleotide-sugar biosynthesis; UDP-N-acetyl-alpha-D-glucosamine biosynthesis; N-acetyl-alpha-D-glucosamine 1-phosphate from alpha-D-glucosamine 6-phosphate (route II): step 2/2. The protein operates within nucleotide-sugar biosynthesis; UDP-N-acetyl-alpha-D-glucosamine biosynthesis; UDP-N-acetyl-alpha-D-glucosamine from N-acetyl-alpha-D-glucosamine 1-phosphate: step 1/1. It participates in bacterial outer membrane biogenesis; LPS lipid A biosynthesis. Its function is as follows. Catalyzes the last two sequential reactions in the de novo biosynthetic pathway for UDP-N-acetylglucosamine (UDP-GlcNAc). The C-terminal domain catalyzes the transfer of acetyl group from acetyl coenzyme A to glucosamine-1-phosphate (GlcN-1-P) to produce N-acetylglucosamine-1-phosphate (GlcNAc-1-P), which is converted into UDP-GlcNAc by the transfer of uridine 5-monophosphate (from uridine 5-triphosphate), a reaction catalyzed by the N-terminal domain. The protein is Bifunctional protein GlmU of Serratia proteamaculans (strain 568).